A 77-amino-acid polypeptide reads, in one-letter code: Metallothionein-like protein 2 (77 aa).

The protein belongs to the metallothionein superfamily. Type 15 family.

Metallothioneins have a high content of cysteine residues that bind various heavy metals. This Trifolium repens (Creeping white clover) protein is Metallothionein-like protein 2 (MT1A).